A 409-amino-acid polypeptide reads, in one-letter code: Argininosuccinate synthase (409 aa).

Residues 11–19 (AYSGGLDTS) and Ala-38 each bind ATP. L-citrulline is bound by residues Tyr-91 and Ser-96. Gly-121 lines the ATP pocket. Thr-123, Asn-127, and Asp-128 together coordinate L-aspartate. An L-citrulline-binding site is contributed by Asn-127. Positions 131, 182, 191, 267, and 279 each coordinate L-citrulline.

Belongs to the argininosuccinate synthase family. Type 1 subfamily. As to quaternary structure, homotetramer.

The protein resides in the cytoplasm. It carries out the reaction L-citrulline + L-aspartate + ATP = 2-(N(omega)-L-arginino)succinate + AMP + diphosphate + H(+). Its pathway is amino-acid biosynthesis; L-arginine biosynthesis; L-arginine from L-ornithine and carbamoyl phosphate: step 2/3. This chain is Argininosuccinate synthase, found in Xanthobacter autotrophicus (strain ATCC BAA-1158 / Py2).